A 337-amino-acid chain; its full sequence is Follistatin (337 aa).

Positions 1 to 22 (PGGVCLLLLLLCQFMEDRSAQA) are cleaved as a signal peptide. In terms of domain architecture, TB spans 23-96 (GNCWLRQAKN…TCENVDCGPG (74 aa)). Intrachain disulfides connect cysteine 25–cysteine 48, cysteine 35–cysteine 81, cysteine 49–cysteine 84, cysteine 88–cysteine 99, cysteine 93–cysteine 109, cysteine 111–cysteine 143, cysteine 115–cysteine 136, cysteine 125–cysteine 157, cysteine 161–cysteine 172, cysteine 166–cysteine 182, cysteine 185–cysteine 218, cysteine 189–cysteine 211, cysteine 200–cysteine 232, cysteine 238–cysteine 249, cysteine 243–cysteine 260, cysteine 263–cysteine 295, cysteine 267–cysteine 288, and cysteine 277–cysteine 309. One can recognise a Follistatin-like 1 domain in the interval 87 to 110 (TCENVDCGPGKKCRMNKKNKPRCV). The 55-residue stretch at 105–159 (NKPRCVCAPDCSNITWKGPVCGLDGKTYRNECALLKARCKEQPELEVQYQGKCKK) folds into the Kazal-like 1 domain. N-linked (GlcNAc...) asparagine glycosylation is present at asparagine 117. The Follistatin-like 2 domain occupies 160-183 (TCRDVFCPGSSTCVVDQTNNAYCV). The Kazal-like 2 domain maps to 179 to 234 (NAYCVTCNRICPEPTSSEQYLCGNDGVTYPSACHLRKATCLLGRSIGLAYEGKCIK). The 25-residue stretch at 237–261 (SCEDIQCTGGKKCLWDFKVGRGRCS) folds into the Follistatin-like 3 domain. A Kazal-like 3 domain is found at 254-311 (KVGRGRCSLCGELCPESKSEEPVCASDNATYASECAMKEAACSSGVLLEVKHSGSCNS). N-linked (GlcNAc...) asparagine glycosylation is present at asparagine 281. A disordered region spans residues 309–337 (CNSISEDTEDEEEDEDQDYSFPISSILEW). The segment covering 314-326 (EDTEDEEEDEDQD) has biased composition (acidic residues).

Monomer.

The protein localises to the secreted. Functionally, binds directly to activin and functions as an activin antagonist. Specific inhibitor of the biosynthesis and secretion of pituitary follicle stimulating hormone (FSH). The polypeptide is Follistatin (Ovis aries (Sheep)).